We begin with the raw amino-acid sequence, 299 residues long: 33 kDa chaperonin (299 aa).

Cystine bridges form between Cys240–Cys242 and Cys273–Cys276.

It belongs to the HSP33 family. In terms of processing, under oxidizing conditions two disulfide bonds are formed involving the reactive cysteines. Under reducing conditions zinc is bound to the reactive cysteines and the protein is inactive.

It localises to the cytoplasm. In terms of biological role, redox regulated molecular chaperone. Protects both thermally unfolding and oxidatively damaged proteins from irreversible aggregation. Plays an important role in the bacterial defense system toward oxidative stress. This is 33 kDa chaperonin from Thermosynechococcus vestitus (strain NIES-2133 / IAM M-273 / BP-1).